A 269-amino-acid polypeptide reads, in one-letter code: Surfeit locus protein 4 (269 aa).

5 helical membrane passes run 64-84, 92-112, 179-199, 203-223, and 242-262; these read FLAT…CVLI, YACF…SILW, FFSI…AIGF, LAAL…NAFW, and TTSV…GVSM. The Di-lysine motif signature appears at 266-269; the sequence is KKEW.

Belongs to the SURF4 family.

It localises to the endoplasmic reticulum membrane. Its subcellular location is the endoplasmic reticulum-Golgi intermediate compartment membrane. The protein localises to the golgi apparatus membrane. In terms of biological role, endoplasmic reticulum cargo receptor that mediates the export of lipoproteins by recruiting cargos into COPII vesicles to facilitate their secretion. Acts as a cargo receptor for lipoproteins bearing both APOB and APOA1, thereby regulating lipoprotein delivery and the maintenance of lipid homeostasis. This is Surfeit locus protein 4 from Takifugu rubripes (Japanese pufferfish).